A 418-amino-acid polypeptide reads, in one-letter code: UDP-N-acetylglucosamine 1-carboxyvinyltransferase (418 aa).

22–23 (KN) contacts phosphoenolpyruvate. Residue arginine 93 participates in UDP-N-acetyl-alpha-D-glucosamine binding. Cysteine 117 acts as the Proton donor in catalysis. Cysteine 117 is subject to 2-(S-cysteinyl)pyruvic acid O-phosphothioketal. Residues aspartate 306 and isoleucine 328 each coordinate UDP-N-acetyl-alpha-D-glucosamine.

This sequence belongs to the EPSP synthase family. MurA subfamily.

Its subcellular location is the cytoplasm. It carries out the reaction phosphoenolpyruvate + UDP-N-acetyl-alpha-D-glucosamine = UDP-N-acetyl-3-O-(1-carboxyvinyl)-alpha-D-glucosamine + phosphate. The protein operates within cell wall biogenesis; peptidoglycan biosynthesis. In terms of biological role, cell wall formation. Adds enolpyruvyl to UDP-N-acetylglucosamine. This Hydrogenovibrio crunogenus (strain DSM 25203 / XCL-2) (Thiomicrospira crunogena) protein is UDP-N-acetylglucosamine 1-carboxyvinyltransferase.